A 729-amino-acid chain; its full sequence is Polyribonucleotide nucleotidyltransferase (729 aa).

Mg(2+)-binding residues include aspartate 485 and aspartate 491. In terms of domain architecture, KH spans 552–611 (PRITTMKVAEDKIRTIIGKGGATIKGLIESTGVSIDIDDSGVIQLFSPDKMALEEAQKQI). In terms of domain architecture, S1 motif spans 621–689 (GQTYQGKVSK…KQGRVKLEWK (69 aa)). Positions 710–729 (TMEEQSEEINSGNKISEEEE) are disordered.

Belongs to the polyribonucleotide nucleotidyltransferase family. As to quaternary structure, component of the RNA degradosome, which is a multiprotein complex involved in RNA processing and mRNA degradation. It depends on Mg(2+) as a cofactor.

It localises to the cytoplasm. The catalysed reaction is RNA(n+1) + phosphate = RNA(n) + a ribonucleoside 5'-diphosphate. Functionally, involved in mRNA degradation. Catalyzes the phosphorolysis of single-stranded polyribonucleotides processively in the 3'- to 5'-direction. This Legionella pneumophila (strain Paris) protein is Polyribonucleotide nucleotidyltransferase.